The sequence spans 514 residues: M-phase inducer phosphatase 1 (514 aa).

The Phosphodegron motif lies at 73–83; the sequence is MGSSESTDSGF. Serine 75 carries the post-translational modification Phosphoserine; by CHEK1. Residues serine 78, serine 81, and serine 87 each carry the phosphoserine; by NEK11 modification. Serine 106 bears the Phosphoserine mark. Phosphoserine; by CHEK1 and CHEK2 is present on serine 123. Residues 140–142 carry the KEN box motif; the sequence is KEN. Position 172 is a phosphoserine; by CHEK1 (serine 172). A disordered region spans residues 256–308; that stretch reads PCGSSTRAVLKRADRSHEEPPRGTKRRKSVPSPVKAKADVPEPAQLPSQSLSL. A compositionally biased stretch (basic and acidic residues) spans 266-277; that stretch reads KRADRSHEEPPR. Serine 271 and serine 284 each carry phosphoserine; by CHEK1 and CHEK2. At serine 311 the chain carries Phosphoserine. A Rhodanese domain is found at 366-472; it reads LIKEFVIIDC…FFLKCQSHCE (107 aa). Residue cysteine 421 is part of the active site. A Phosphothreonine; by CHEK1 modification is found at threonine 497. Phosphoserine; by PLK3 occurs at positions 503 and 509.

The protein belongs to the MPI phosphatase family. In terms of assembly, interacts with CCNB1/cyclin B1. Interacts with YWHAE/14-3-3 epsilon when phosphorylated. Interacts with CUL1 specifically when CUL1 is neddylated and active. Interacts with BTRC/BTRCP1 and FBXW11/BTRCP2. Interactions with CUL1, BTRC and FBXW11 are enhanced upon DNA damage. Interacts with CHEK2; mediates CDC25A phosphorylation and degradation in response to infrared-induced DNA damages. Interacts with HSP90AB1; prevents heat shock-mediated CDC25A degradation and contributes to cell cycle progression. Post-translationally, phosphorylated by CHEK1 on Ser-75, Ser-123, Ser-172, Ser-271, Ser-284 and Thr-497 during checkpoint mediated cell cycle arrest. Also phosphorylated by CHEK2 on Ser-123, Ser-271, and Ser-284 during checkpoint mediated cell cycle arrest. Phosphorylation on Ser-172 and Thr-497 creates binding sites for YWHAE/14-3-3 epsilon which inhibits CDC25A. Phosphorylation on Ser-75, Ser-123, Ser-172, Ser-271 and Ser-284 may also promote ubiquitin-dependent proteolysis of CDC25A by the SCF complex. Phosphorylation of CDC25A at Ser-75 by CHEK1 primes it for subsequent phosphorylation at Ser-75, Ser-81 and Ser-87 by NEK11. Phosphorylation by NEK11 is required for BTRC-mediated polyubiquitination and degradation. Phosphorylation by PIM1 leads to an increase in phosphatase activity. Phosphorylated by PLK3 following DNA damage, leading to promote its ubiquitination and degradation. In terms of processing, ubiquitinated by the anaphase promoting complex/cyclosome (APC/C) ubiquitin ligase complex that contains FZR1/CDH1 during G1 phase leading to its degradation by the proteasome. Ubiquitinated by a SCF complex containing BTRC and FBXW11 during S phase leading to its degradation by the proteasome. Deubiquitination by USP17L2/DUB3 leads to its stabilization. Ubiquitously expressed in most developing tissue. High levels in the testis and lower levels in the ovary, particularly in germ cells. Lower levels also in kidney, liver, heart and muscle.

It carries out the reaction O-phospho-L-tyrosyl-[protein] + H2O = L-tyrosyl-[protein] + phosphate. With respect to regulation, stimulated by B-type cyclins. Stimulated by PIM1-mediated phosphorylation. Functionally, tyrosine protein phosphatase which functions as a dosage-dependent inducer of mitotic progression. Directly dephosphorylates CDK1 and stimulates its kinase activity. Also dephosphorylates CDK2 in complex with cyclin-E, in vitro. The chain is M-phase inducer phosphatase 1 (Cdc25a) from Mus musculus (Mouse).